Reading from the N-terminus, the 696-residue chain is Polyribonucleotide nucleotidyltransferase (696 aa).

Mg(2+) contacts are provided by aspartate 483 and aspartate 489. Positions 550–609 (PRITTIYVKTDKIRDVIGSGGKNIRGITEATGVTIDIDDTGKINIASTDKAACDLAIKMI) constitute a KH domain. Residues 619-687 (GKLYMGLVKK…KQGKIKLSRK (69 aa)) form the S1 motif domain.

Belongs to the polyribonucleotide nucleotidyltransferase family. It depends on Mg(2+) as a cofactor.

The protein resides in the cytoplasm. It catalyses the reaction RNA(n+1) + phosphate = RNA(n) + a ribonucleoside 5'-diphosphate. Functionally, involved in mRNA degradation. Catalyzes the phosphorolysis of single-stranded polyribonucleotides processively in the 3'- to 5'-direction. This chain is Polyribonucleotide nucleotidyltransferase, found in Geotalea uraniireducens (strain Rf4) (Geobacter uraniireducens).